The sequence spans 349 residues: UDP-N-acetylenolpyruvoylglucosamine reductase (349 aa).

Residues 24 to 197 (FGIDATARFA…VAVTFRLPKR (174 aa)) enclose the FAD-binding PCMH-type domain. The active site involves arginine 173. Serine 249 functions as the Proton donor in the catalytic mechanism. Residue glutamate 345 is part of the active site.

Belongs to the MurB family. FAD is required as a cofactor.

The protein resides in the cytoplasm. The catalysed reaction is UDP-N-acetyl-alpha-D-muramate + NADP(+) = UDP-N-acetyl-3-O-(1-carboxyvinyl)-alpha-D-glucosamine + NADPH + H(+). The protein operates within cell wall biogenesis; peptidoglycan biosynthesis. Its function is as follows. Cell wall formation. The polypeptide is UDP-N-acetylenolpyruvoylglucosamine reductase (Burkholderia ambifaria (strain MC40-6)).